Here is a 351-residue protein sequence, read N- to C-terminus: MKKQLDQLTAYTPGLSPESLKKQYGIKGELHKLASNENVYGPSPKVKTAIQSHLDELYYYPESGSPKLREAISQQLNVDASRILFGAGLDEVILMISRAVLSPGDKIITSESTFGQYYHNAIVESADVIQVPLKDGGFDLDGMLQQIDNKTSLIWLCNPNNPTGTYFSHDELFNFLKRVPSDIPVLIDEAYVEFVTADDFPDTLKLQEDFDNAFLLRTFSKAYGLAGLRVGYVIASEDAIEKWNIIRPPFNVTRISEYAAIAALEDQEYLKEVTQKNSFERDKFYQIPQSQHFLPSQANFVFVKTSRSQALYDALLNVGCITRLFPNGVRITIGLPEQNNKMIEVLKHFEY.

N6-(pyridoxal phosphate)lysine is present on Lys-221.

The protein belongs to the class-II pyridoxal-phosphate-dependent aminotransferase family. Histidinol-phosphate aminotransferase subfamily. As to quaternary structure, homodimer. Pyridoxal 5'-phosphate serves as cofactor.

The enzyme catalyses L-histidinol phosphate + 2-oxoglutarate = 3-(imidazol-4-yl)-2-oxopropyl phosphate + L-glutamate. It functions in the pathway amino-acid biosynthesis; L-histidine biosynthesis; L-histidine from 5-phospho-alpha-D-ribose 1-diphosphate: step 7/9. In Staphylococcus epidermidis (strain ATCC 35984 / DSM 28319 / BCRC 17069 / CCUG 31568 / BM 3577 / RP62A), this protein is Histidinol-phosphate aminotransferase.